A 163-amino-acid chain; its full sequence is MLTLTERLPQAAPADATLTLPFEVRQKSRFRATLDDGREVGVMLSRGEILRDGQCLQAGDGTVVRVHAAAEAVSTVRGDDGLALARACYHLGNRHVPLQIGAGFARYLHDHVLDDMLRGLGLEVVSEQAPFEPEPGAYGGGHGHTHSHDHSHQHDPAGHAHEH.

The segment at 130–163 is disordered; it reads PFEPEPGAYGGGHGHTHSHDHSHQHDPAGHAHEH. Residues 146-163 show a composition bias toward basic and acidic residues; sequence HSHDHSHQHDPAGHAHEH.

It belongs to the UreE family.

The protein localises to the cytoplasm. In terms of biological role, involved in urease metallocenter assembly. Binds nickel. Probably functions as a nickel donor during metallocenter assembly. The sequence is that of Urease accessory protein UreE from Alkalilimnicola ehrlichii (strain ATCC BAA-1101 / DSM 17681 / MLHE-1).